The chain runs to 155 residues: Nascent polypeptide-associated complex subunit beta (155 aa).

Disordered stretches follow at residues 1 to 39 and 122 to 155; these read MDQA…DDKK and QNMQ…SKVE. Positions 21-31 are enriched in basic residues; that stretch reads TPRRKTKKVHK. The region spanning 34-99 is the NAC-A/B domain; sequence GTDDKKLQTS…GEEKELTELV (66 aa). Positions 125–135 are enriched in basic and acidic residues; that stretch reads QKKEGEAKKEG.

Belongs to the NAC-beta family. As to quaternary structure, part of the nascent polypeptide-associated complex (NAC), consisting of EGD2 and EGD1. NAC associates with ribosomes via EGD1.

The protein localises to the cytoplasm. The protein resides in the nucleus. Component of the nascent polypeptide-associated complex (NAC), a dynamic component of the ribosomal exit tunnel, protecting the emerging polypeptides from interaction with other cytoplasmic proteins to ensure appropriate nascent protein targeting. The NAC complex also promotes mitochondrial protein import by enhancing productive ribosome interactions with the outer mitochondrial membrane and blocks the inappropriate interaction of ribosomes translating non-secretory nascent polypeptides with translocation sites in the membrane of the endoplasmic reticulum. EGD1 may act as a transcription factor that exert a negative effect on the expression of several genes that are transcribed by RNA polymerase II. This is Nascent polypeptide-associated complex subunit beta (EGD1) from Coccidioides immitis (strain RS) (Valley fever fungus).